We begin with the raw amino-acid sequence, 473 residues long: FAD-dependent monooxygeanse terM (473 aa).

A signal peptide spans 1-22; sequence MSENFKVLIIGGSVAGLTLALC. The FAD site is built by glutamate 34, glycine 48, arginine 107, aspartate 303, and alanine 316. The helical transmembrane segment at 441 to 461 threads the bilayer; sequence VLYLICGALLAWWASGLVWHF.

The protein belongs to the paxM FAD-dependent monooxygenase family. Requires FAD as cofactor.

The protein resides in the membrane. It functions in the pathway secondary metabolite biosynthesis. In terms of biological role, FAD-dependent monooxygeanse; part of the gene cluster that mediates the biosynthesis of terpendoles, indole-diterpene (IDT) mycotoxins including terpendole I, terpendole K, terpendole C, as well as the kinesin Eg5 inhibitor terpendole E. Terpendoles biosynthesis begins with the synthesis of geranylgeranyl diphosphate (GGPP) by a yet unidentified GGPP synthase. Condensation of indole-3-glycerol phosphate with GGPP by the prenyltransferase terC then forms 3-geranylgeranylindole (3-GGI), followed by epoxidation and cyclization of this intermediate (by the FAD-dependent monooxygeanse terM and the terpene cyclase terB) to form paspaline. The cytochrome monooxygenase terQ then hydroxylates paspalline at C-11 to yield terpendole E. The cytochrome monooxygenase terP converts terpendole E to 13-desoxyterpendole I, and terQ converts 13-desoxyterpendole I into terpendole I. TerF and terK are required for conversion of terpendole I to terpendole C which is further converted to terpendole K. In Tolypocladium album (Soil fungus), this protein is FAD-dependent monooxygeanse terM.